A 961-amino-acid polypeptide reads, in one-letter code: Valine--tRNA ligase (961 aa).

A 'HIGH' region motif is present at residues P48 to H58. The 'KMSKS' region motif lies at K560–S564. K563 lines the ATP pocket. The stretch at F892–L961 forms a coiled coil.

Belongs to the class-I aminoacyl-tRNA synthetase family. ValS type 1 subfamily. In terms of assembly, monomer.

It is found in the cytoplasm. It carries out the reaction tRNA(Val) + L-valine + ATP = L-valyl-tRNA(Val) + AMP + diphosphate. In terms of biological role, catalyzes the attachment of valine to tRNA(Val). As ValRS can inadvertently accommodate and process structurally similar amino acids such as threonine, to avoid such errors, it has a 'posttransfer' editing activity that hydrolyzes mischarged Thr-tRNA(Val) in a tRNA-dependent manner. The protein is Valine--tRNA ligase of Haemophilus ducreyi (strain 35000HP / ATCC 700724).